A 455-amino-acid chain; its full sequence is MSLDIVILAAGQGTRMRSALPKVLHPVAGNSMLGHVIHSARQLQPQGIHVVIGHGAELVRERLAADDLNFVMQDKQLGTGHAVAQALPALTADTVLVLYGDVPLIEVETLQRLLAKANDQQLGLLTVTLDDPTGYGRIVRDEQGKVTAIVEHKDANDAQKAIKEGNTGILALPAARLADWMGRLSNNNAQGEYYLTDVIAMAVADGLVVATEQPHDAMEVQGANDRRQLSELERHYQLREGRRLMAQGVTLRDPARFDVRGEVSVGRDVLIDINVILEGKVVIEDDVQIGPNCVIKNTTLRKGAVVKANSHLEGAVMGEGSDAGPFARLRPGSVLDAKAHVGNFVELKNAHLGEGAKAGHLTYLGDAEIGARTNIGAGTITCNYDGANKFKTVMGEDVFIGSNNSLVAPVEIKAGATTAAGSTITQAVEAGDLAVARARQRNISGWKRPEKIKKS.

A pyrophosphorylase region spans residues M1–R226. Residues L8–G11, K22, Q73, G78–T79, Y99–D101, G136, E151, N166, and N224 each bind UDP-N-acetyl-alpha-D-glucosamine. D101 is a binding site for Mg(2+). Residue N224 participates in Mg(2+) binding. A linker region spans residues R227 to Q247. The N-acetyltransferase stretch occupies residues G248–S455. Positions 330 and 348 each coordinate UDP-N-acetyl-alpha-D-glucosamine. H360 serves as the catalytic Proton acceptor. UDP-N-acetyl-alpha-D-glucosamine contacts are provided by Y363 and N374. Acetyl-CoA is bound by residues A377, N383–Y384, S402, A420, and R437.

In the N-terminal section; belongs to the N-acetylglucosamine-1-phosphate uridyltransferase family. It in the C-terminal section; belongs to the transferase hexapeptide repeat family. Homotrimer. Mg(2+) serves as cofactor.

Its subcellular location is the cytoplasm. It catalyses the reaction alpha-D-glucosamine 1-phosphate + acetyl-CoA = N-acetyl-alpha-D-glucosamine 1-phosphate + CoA + H(+). The enzyme catalyses N-acetyl-alpha-D-glucosamine 1-phosphate + UTP + H(+) = UDP-N-acetyl-alpha-D-glucosamine + diphosphate. It functions in the pathway nucleotide-sugar biosynthesis; UDP-N-acetyl-alpha-D-glucosamine biosynthesis; N-acetyl-alpha-D-glucosamine 1-phosphate from alpha-D-glucosamine 6-phosphate (route II): step 2/2. It participates in nucleotide-sugar biosynthesis; UDP-N-acetyl-alpha-D-glucosamine biosynthesis; UDP-N-acetyl-alpha-D-glucosamine from N-acetyl-alpha-D-glucosamine 1-phosphate: step 1/1. The protein operates within bacterial outer membrane biogenesis; LPS lipid A biosynthesis. Catalyzes the last two sequential reactions in the de novo biosynthetic pathway for UDP-N-acetylglucosamine (UDP-GlcNAc). The C-terminal domain catalyzes the transfer of acetyl group from acetyl coenzyme A to glucosamine-1-phosphate (GlcN-1-P) to produce N-acetylglucosamine-1-phosphate (GlcNAc-1-P), which is converted into UDP-GlcNAc by the transfer of uridine 5-monophosphate (from uridine 5-triphosphate), a reaction catalyzed by the N-terminal domain. This Pseudomonas putida (strain ATCC 47054 / DSM 6125 / CFBP 8728 / NCIMB 11950 / KT2440) protein is Bifunctional protein GlmU.